A 507-amino-acid chain; its full sequence is Maturase K (507 aa).

It belongs to the intron maturase 2 family. MatK subfamily.

Its subcellular location is the plastid. It is found in the chloroplast. Usually encoded in the trnK tRNA gene intron. Probably assists in splicing its own and other chloroplast group II introns. This is Maturase K from Ranunculus acris (Meadow buttercup).